A 206-amino-acid polypeptide reads, in one-letter code: Cytidylate kinase (206 aa).

9-17 lines the ATP pocket; the sequence is GPAAAGKGT. The span at 155–168 shows a compositional bias: basic and acidic residues; it reads LRERDRRDREREAA. Residues 155-174 are disordered; sequence LRERDRRDREREAAPLRPAP.

Belongs to the cytidylate kinase family. Type 1 subfamily.

Its subcellular location is the cytoplasm. It carries out the reaction CMP + ATP = CDP + ADP. The enzyme catalyses dCMP + ATP = dCDP + ADP. In Cereibacter sphaeroides (strain KD131 / KCTC 12085) (Rhodobacter sphaeroides), this protein is Cytidylate kinase.